Consider the following 297-residue polypeptide: Glucuronoxylan 4-O-methyltransferase 3 (297 aa).

A helical membrane pass occupies residues 9–29 (LNLKVIFIGSSILILIIIYLA). The span at 35–47 (SSSSKPISKTNLS) shows a compositional bias: low complexity. Positions 35–63 (SSSSKPISKTNLSQEEEETQHKQEGCPTT) are disordered.

The protein belongs to the methyltransferase superfamily. As to expression, expressed in hypocotyls, roots, rosette leaves, stems and siliques.

The protein localises to the golgi apparatus membrane. It carries out the reaction glucuronoxylan D-glucuronate + n S-adenosyl-L-methionine = glucuronoxylan 4-O-methyl-D-glucuronate + n S-adenosyl-L-homocysteine + n H(+). Its function is as follows. Methyltransferase catalyzing 4-O-methylation of glucuronic acid side chains on xylan. The protein is Glucuronoxylan 4-O-methyltransferase 3 (GXM3) of Arabidopsis thaliana (Mouse-ear cress).